We begin with the raw amino-acid sequence, 211 residues long: Ribonuclease HII (211 aa).

An RNase H type-2 domain is found at 1-205 (MRFGVDEAGK…CDDVLAAASQ (205 aa)). A divalent metal cation contacts are provided by Asp6, Glu7, and Asp100.

It belongs to the RNase HII family. It depends on Mn(2+) as a cofactor. Mg(2+) serves as cofactor.

The protein localises to the cytoplasm. It catalyses the reaction Endonucleolytic cleavage to 5'-phosphomonoester.. Functionally, endonuclease that specifically degrades the RNA of RNA-DNA hybrids. This Haloarcula marismortui (strain ATCC 43049 / DSM 3752 / JCM 8966 / VKM B-1809) (Halobacterium marismortui) protein is Ribonuclease HII.